The primary structure comprises 254 residues: Adenosylcobinamide-GDP ribazoletransferase (254 aa).

Helical transmembrane passes span 29-49 (LFWFPVVGLLLGSIQAALGYF), 50-70 (TSLLGWNELSAAFVVLGGIAL), 98-118 (IMKDPNVGSFGAIALSGMMLL), 121-141 (IAILKLVDIGAFACIAAGVLL), 170-190 (AGVVHIVVTSALTLLFLFPLL), 198-218 (LYAVVAMISAALAAALLTGLL), and 230-250 (VLGAGSEVTELFVWIAAALSA).

Belongs to the CobS family. Mg(2+) serves as cofactor.

It localises to the cell inner membrane. The enzyme catalyses alpha-ribazole + adenosylcob(III)inamide-GDP = adenosylcob(III)alamin + GMP + H(+). The catalysed reaction is alpha-ribazole 5'-phosphate + adenosylcob(III)inamide-GDP = adenosylcob(III)alamin 5'-phosphate + GMP + H(+). It participates in cofactor biosynthesis; adenosylcobalamin biosynthesis; adenosylcobalamin from cob(II)yrinate a,c-diamide: step 7/7. Its function is as follows. Joins adenosylcobinamide-GDP and alpha-ribazole to generate adenosylcobalamin (Ado-cobalamin). Also synthesizes adenosylcobalamin 5'-phosphate from adenosylcobinamide-GDP and alpha-ribazole 5'-phosphate. This Pelodictyon phaeoclathratiforme (strain DSM 5477 / BU-1) protein is Adenosylcobinamide-GDP ribazoletransferase.